Here is a 230-residue protein sequence, read N- to C-terminus: Biosynthetic peptidoglycan transglycosylase (230 aa).

Residues 10-30 form a helical membrane-spanning segment; sequence IFLFFIAVIFVYQFWIFSQIV.

This sequence belongs to the glycosyltransferase 51 family.

The protein resides in the cell inner membrane. It catalyses the reaction [GlcNAc-(1-&gt;4)-Mur2Ac(oyl-L-Ala-gamma-D-Glu-L-Lys-D-Ala-D-Ala)](n)-di-trans,octa-cis-undecaprenyl diphosphate + beta-D-GlcNAc-(1-&gt;4)-Mur2Ac(oyl-L-Ala-gamma-D-Glu-L-Lys-D-Ala-D-Ala)-di-trans,octa-cis-undecaprenyl diphosphate = [GlcNAc-(1-&gt;4)-Mur2Ac(oyl-L-Ala-gamma-D-Glu-L-Lys-D-Ala-D-Ala)](n+1)-di-trans,octa-cis-undecaprenyl diphosphate + di-trans,octa-cis-undecaprenyl diphosphate + H(+). It participates in cell wall biogenesis; peptidoglycan biosynthesis. Functionally, peptidoglycan polymerase that catalyzes glycan chain elongation from lipid-linked precursors. The chain is Biosynthetic peptidoglycan transglycosylase from Nitrosospira multiformis (strain ATCC 25196 / NCIMB 11849 / C 71).